Here is a 225-residue protein sequence, read N- to C-terminus: Urease accessory protein UreF (225 aa).

Belongs to the UreF family. As to quaternary structure, ureD, UreF and UreG form a complex that acts as a GTP-hydrolysis-dependent molecular chaperone, activating the urease apoprotein by helping to assemble the nickel containing metallocenter of UreC. The UreE protein probably delivers the nickel.

It is found in the cytoplasm. Required for maturation of urease via the functional incorporation of the urease nickel metallocenter. This chain is Urease accessory protein UreF, found in Picosynechococcus sp. (strain ATCC 27264 / PCC 7002 / PR-6) (Agmenellum quadruplicatum).